We begin with the raw amino-acid sequence, 2290 residues long: Protein Ycf2 (2290 aa).

Residue 1644–1651 (GSIGTGRS) coordinates ATP.

This sequence belongs to the Ycf2 family.

It is found in the plastid. The protein localises to the chloroplast stroma. Its function is as follows. Probable ATPase of unknown function. Its presence in a non-photosynthetic plant (Epifagus virginiana) and experiments in tobacco indicate that it has an essential function which is probably not related to photosynthesis. The protein is Protein Ycf2 of Barbarea verna (Land cress).